Reading from the N-terminus, the 145-residue chain is Probable low molecular weight protein-tyrosine-phosphatase EpsP (145 aa).

Residue Cys-9 is the Nucleophile of the active site. Arg-15 is an active-site residue. The Proton donor role is filled by Asp-114.

It belongs to the low molecular weight phosphotyrosine protein phosphatase family.

It catalyses the reaction O-phospho-L-tyrosyl-[protein] + H2O = L-tyrosyl-[protein] + phosphate. It functions in the pathway glycan metabolism; exopolysaccharide biosynthesis. In terms of biological role, may be involved in assembly or function of the EPS I polymerization/export complex and/or the EpsB ATPase. Alternatively it may function in the removal of the terminal phosphate from C55-isoprenyl pyrophosphate in order to recycle the C55-isoprenyl phosphate lipid carrier used in the synthesis of polysaccharide repeat units. The chain is Probable low molecular weight protein-tyrosine-phosphatase EpsP (epsP) from Ralstonia solanacearum (Pseudomonas solanacearum).